A 148-amino-acid polypeptide reads, in one-letter code: Large ribosomal subunit protein bL9 (148 aa).

The protein belongs to the bacterial ribosomal protein bL9 family.

Its function is as follows. Binds to the 23S rRNA. This chain is Large ribosomal subunit protein bL9, found in Pseudomonas fluorescens (strain SBW25).